The primary structure comprises 126 residues: Large ribosomal subunit protein bL12 (126 aa).

The protein belongs to the bacterial ribosomal protein bL12 family. Homodimer. Part of the ribosomal stalk of the 50S ribosomal subunit. Forms a multimeric L10(L12)X complex, where L10 forms an elongated spine to which 2 to 4 L12 dimers bind in a sequential fashion. Binds GTP-bound translation factors.

Functionally, forms part of the ribosomal stalk which helps the ribosome interact with GTP-bound translation factors. Is thus essential for accurate translation. The sequence is that of Large ribosomal subunit protein bL12 from Rhizorhabdus wittichii (strain DSM 6014 / CCUG 31198 / JCM 15750 / NBRC 105917 / EY 4224 / RW1) (Sphingomonas wittichii).